We begin with the raw amino-acid sequence, 351 residues long: Palmitoyltransferase spe-10 (351 aa).

Transmembrane regions (helical) follow at residues 21 to 43, 60 to 80, 198 to 218, and 241 to 261; these read TGWI…LWWS, IQAT…MWSL, YFLL…LTSL, and LFSF…LIIF. Positions 154–204 constitute a DHHC domain; sequence KYCYECGHIKPDRARHCSSCGKCCIKYDHHCPWINMCVTHVNYKYFLLYII.

The protein belongs to the DHHC palmitoyltransferase family. As to expression, expressed during spermatogenesis in budding and budded spermatids.

It is found in the membrane. It carries out the reaction L-cysteinyl-[protein] + hexadecanoyl-CoA = S-hexadecanoyl-L-cysteinyl-[protein] + CoA. Involved in spermatogenesis, specifically in the morphogenesis of fibrous body-membranous organelles (FB-MO), which are Golgi-derived organelles used for transporting sperm-specific components, in spermatocytes and in their localization into budding spermatids. Required for the proper formation of spermatids and spermatozoa. This is Palmitoyltransferase spe-10 from Caenorhabditis elegans.